Here is a 413-residue protein sequence, read N- to C-terminus: NAD(P)H oxidoreductase RTN4IP1, mitochondrial (413 aa).

Residues 1 to 23 constitute a mitochondrion transit peptide; that stretch reads MTAAGFNSILCLRQLVRLNRRQY. Residues 27–52 form a disordered region; it reads AKSVLSGSQTNDQATPPPTSKSADKM. Positions 31 to 40 are enriched in polar residues; it reads LSGSQTNDQA. Residues 61-405 form the Enoyl reductase (ER) domain; that stretch reads GDIDELQLSE…SGHLRGKIVV (345 aa). NADPH contacts are provided by Ser-228, Gly-230, Val-231, Ser-251, Tyr-269, Gly-353, Phe-355, His-398, and Arg-400.

This sequence belongs to the zinc-containing alcohol dehydrogenase family. Quinone oxidoreductase subfamily.

Its subcellular location is the mitochondrion matrix. It carries out the reaction a quinone + NADH + H(+) = a quinol + NAD(+). The enzyme catalyses a quinone + NADPH + H(+) = a quinol + NADP(+). Its pathway is cofactor biosynthesis; ubiquinone biosynthesis. NAD(P)H oxidoreductase. Involved in the ubiquinone biosynthetic pathway. In Drosophila melanogaster (Fruit fly), this protein is NAD(P)H oxidoreductase RTN4IP1, mitochondrial.